The sequence spans 435 residues: Methylenetetrahydrofolate--tRNA-(uracil-5-)-methyltransferase TrmFO (435 aa).

Position 7–12 (7–12) interacts with FAD; it reads GAGLAG.

It belongs to the MnmG family. TrmFO subfamily. It depends on FAD as a cofactor.

Its subcellular location is the cytoplasm. The enzyme catalyses uridine(54) in tRNA + (6R)-5,10-methylene-5,6,7,8-tetrahydrofolate + NADH + H(+) = 5-methyluridine(54) in tRNA + (6S)-5,6,7,8-tetrahydrofolate + NAD(+). It carries out the reaction uridine(54) in tRNA + (6R)-5,10-methylene-5,6,7,8-tetrahydrofolate + NADPH + H(+) = 5-methyluridine(54) in tRNA + (6S)-5,6,7,8-tetrahydrofolate + NADP(+). In terms of biological role, catalyzes the folate-dependent formation of 5-methyl-uridine at position 54 (M-5-U54) in all tRNAs. This is Methylenetetrahydrofolate--tRNA-(uracil-5-)-methyltransferase TrmFO from Thermotoga petrophila (strain ATCC BAA-488 / DSM 13995 / JCM 10881 / RKU-1).